The following is a 609-amino-acid chain: Pescadillo homolog (609 aa).

Residues 320 to 413 enclose the BRCT domain; sequence KLKNLFKGLK…KLLPTNKYFI (94 aa). Disordered stretches follow at residues 443 to 462 and 488 to 609; these read DEFE…DEDF and ALNS…EILA. 2 stretches are compositionally biased toward basic and acidic residues: residues 444 to 453 and 488 to 498; these read EFEKQERAEG and ALNSGEAKKEQ. Positions 481-509 form a coiled coil; the sequence is FREEKAEALNSGEAKKEQAEEDNEDDDQE. Residues 499–512 are compositionally biased toward acidic residues; sequence AEEDNEDDDQEPDQ. Composition is skewed to basic and acidic residues over residues 513-524 and 533-552; these read DETKKQRSEKKQ and VFKE…EALR. Residues 539 to 607 are a coiled coil; it reads KEQKQLTKQE…QKRKAQRKEI (69 aa). Basic residues predominate over residues 554-564; sequence KMVKSRHKKLY. The segment covering 567 to 609 has biased composition (basic and acidic residues); it reads LLDKQKKATKEANLLREKRQQIDKQKRKEQTQKRKAQRKEILA.

Belongs to the pescadillo family.

It is found in the nucleus. The protein resides in the nucleolus. It localises to the nucleoplasm. Functionally, required for maturation of ribosomal RNAs and formation of the large ribosomal subunit. The polypeptide is Pescadillo homolog (Aedes aegypti (Yellowfever mosquito)).